A 145-amino-acid chain; its full sequence is 3-hydroxyacyl-[acyl-carrier-protein] dehydratase FabZ (145 aa).

Histidine 52 is an active-site residue.

It belongs to the thioester dehydratase family. FabZ subfamily.

The protein localises to the cytoplasm. The enzyme catalyses a (3R)-hydroxyacyl-[ACP] = a (2E)-enoyl-[ACP] + H2O. Its function is as follows. Involved in unsaturated fatty acids biosynthesis. Catalyzes the dehydration of short chain beta-hydroxyacyl-ACPs and long chain saturated and unsaturated beta-hydroxyacyl-ACPs. The sequence is that of 3-hydroxyacyl-[acyl-carrier-protein] dehydratase FabZ from Deinococcus radiodurans (strain ATCC 13939 / DSM 20539 / JCM 16871 / CCUG 27074 / LMG 4051 / NBRC 15346 / NCIMB 9279 / VKM B-1422 / R1).